Consider the following 95-residue polypeptide: Protein TusB (95 aa).

Belongs to the DsrH/TusB family. Heterohexamer, formed by a dimer of trimers. The hexameric TusBCD complex contains 2 copies each of TusB, TusC and TusD. The TusBCD complex interacts with TusE.

The protein resides in the cytoplasm. Part of a sulfur-relay system required for 2-thiolation of 5-methylaminomethyl-2-thiouridine (mnm(5)s(2)U) at tRNA wobble positions. This chain is Protein TusB, found in Sodalis glossinidius (strain morsitans).